The primary structure comprises 471 residues: Variant surface glycoprotein ILTAT 1.1BC (471 aa).

The signal sequence occupies residues 1–21 (MVKAIASLMLLHIWAIEEIKA). Asparagine 130 is a glycosylation site (N-linked (GlcNAc...) asparagine). Residues 158–168 (TVSKTTECNTE) are compositionally biased toward polar residues. Disordered regions lie at residues 158–183 (TVSKTTECNTESPEDTKEPDQTTLSK) and 204–232 (GGACSAASSSDKIHITNETDSKNKGTTAS). Residues 214-226 (DKIHITNETDSKN) show a composition bias toward basic and acidic residues. 2 N-linked (GlcNAc...) asparagine glycosylation sites follow: asparagine 220 and asparagine 260. 2 cysteine pairs are disulfide-bonded: cysteine 397-cysteine 410 and cysteine 406-cysteine 421. The disordered stretch occupies residues 432 to 454 (AEQAATNQETEGKDGKTTNTTGS). N-linked (GlcNAc...) asparagine glycosylation occurs at asparagine 450. Serine 454 is lipidated: GPI-anchor amidated serine. The propeptide at 455 to 471 (NSFLINKAPVLLAFLLL) is removed in mature form.

It localises to the cell membrane. Functionally, VSG forms a coat on the surface of the parasite. The trypanosome evades the immune response of the host by expressing a series of antigenically distinct VSGs from an estimated 1000 VSG genes. The chain is Variant surface glycoprotein ILTAT 1.1BC from Trypanosoma brucei brucei.